A 231-amino-acid polypeptide reads, in one-letter code: Ribonuclease HII (231 aa).

The 190-residue stretch at glutamate 38 to leucine 227 folds into the RNase H type-2 domain. Residues aspartate 44, glutamate 45, and aspartate 136 each coordinate a divalent metal cation.

Belongs to the RNase HII family. The cofactor is Mn(2+). Mg(2+) is required as a cofactor.

It is found in the cytoplasm. The enzyme catalyses Endonucleolytic cleavage to 5'-phosphomonoester.. Functionally, endonuclease that specifically degrades the RNA of RNA-DNA hybrids. This chain is Ribonuclease HII, found in Carboxydothermus hydrogenoformans (strain ATCC BAA-161 / DSM 6008 / Z-2901).